The primary structure comprises 489 residues: Homoserine O-acetyltransferase (489 aa).

The region spanning 47-354 (NAILVCHALT…NYGHDSFLLE (308 aa)) is the AB hydrolase-1 domain. S152 functions as the Nucleophile in the catalytic mechanism. A substrate-binding site is contributed by R221. Residues D315 and H348 contribute to the active site. Substrate is bound at residue D349. CBS domains follow at residues 375–434 (MIED…NLEE) and 436–489 (MTKN…IEEF).

This sequence belongs to the AB hydrolase superfamily. MetX family. In terms of assembly, homodimer.

It is found in the cytoplasm. It catalyses the reaction L-homoserine + acetyl-CoA = O-acetyl-L-homoserine + CoA. Its pathway is amino-acid biosynthesis; L-methionine biosynthesis via de novo pathway; O-acetyl-L-homoserine from L-homoserine: step 1/1. Transfers an acetyl group from acetyl-CoA to L-homoserine, forming acetyl-L-homoserine. The polypeptide is Homoserine O-acetyltransferase (Methanohalobium evestigatum (strain ATCC BAA-1072 / DSM 3721 / NBRC 107634 / OCM 161 / Z-7303)).